Here is a 361-residue protein sequence, read N- to C-terminus: Nicotinate-nucleotide--dimethylbenzimidazole phosphoribosyltransferase (361 aa).

Glutamate 315 acts as the Proton acceptor in catalysis.

This sequence belongs to the CobT family.

The enzyme catalyses 5,6-dimethylbenzimidazole + nicotinate beta-D-ribonucleotide = alpha-ribazole 5'-phosphate + nicotinate + H(+). It participates in nucleoside biosynthesis; alpha-ribazole biosynthesis; alpha-ribazole from 5,6-dimethylbenzimidazole: step 1/2. In terms of biological role, catalyzes the synthesis of alpha-ribazole-5'-phosphate from nicotinate mononucleotide (NAMN) and 5,6-dimethylbenzimidazole (DMB). This is Nicotinate-nucleotide--dimethylbenzimidazole phosphoribosyltransferase from Clostridium perfringens (strain ATCC 13124 / DSM 756 / JCM 1290 / NCIMB 6125 / NCTC 8237 / Type A).